Reading from the N-terminus, the 140-residue chain is Nucleoside diphosphate kinase (140 aa).

Positions 11, 59, 87, 93, 104, and 114 each coordinate ATP. Residue H117 is the Pros-phosphohistidine intermediate of the active site.

It belongs to the NDK family. As to quaternary structure, homotetramer. The cofactor is Mg(2+).

Its subcellular location is the cytoplasm. The enzyme catalyses a 2'-deoxyribonucleoside 5'-diphosphate + ATP = a 2'-deoxyribonucleoside 5'-triphosphate + ADP. It catalyses the reaction a ribonucleoside 5'-diphosphate + ATP = a ribonucleoside 5'-triphosphate + ADP. Major role in the synthesis of nucleoside triphosphates other than ATP. The ATP gamma phosphate is transferred to the NDP beta phosphate via a ping-pong mechanism, using a phosphorylated active-site intermediate. This chain is Nucleoside diphosphate kinase, found in Methylorubrum populi (strain ATCC BAA-705 / NCIMB 13946 / BJ001) (Methylobacterium populi).